Here is a 177-residue protein sequence, read N- to C-terminus: Interleukin-1 receptor antagonist protein (177 aa).

The N-terminal stretch at 1-25 (MRPSRSTRRHLISLLLFLFHSETAC) is a signal peptide. A disulfide bridge links Cys91 with Cys141. Residue Asn109 is glycosylated (N-linked (GlcNAc...) asparagine).

The protein belongs to the IL-1 family.

It localises to the secreted. Functionally, anti-inflammatory antagonist of interleukin-1 family of proinflammatory cytokines such as interleukin-1beta/IL1B and interleukin-1alpha/IL1A. Protects from immune dysregulation and uncontrolled systemic inflammation triggered by IL1 for a range of innate stimulatory agents such as pathogens. This is Interleukin-1 receptor antagonist protein (IL1RN) from Oryctolagus cuniculus (Rabbit).